A 597-amino-acid polypeptide reads, in one-letter code: DNA primase (597 aa).

Zn(2+) is bound by residues Cys40, His43, Cys61, and Cys64. A CHC2-type zinc finger spans residues 40–64 (CPFHGEKTPSFSVSPEKQIFHCFGC). The Toprim domain occupies 262–342 (QEALLVEGFA…RVKVASLPNG (81 aa)). Mg(2+)-binding residues include Glu268, Asp311, and Asp313. Residues 429–447 (LSRSQRERTKPREAPDGET) are compositionally biased toward basic and acidic residues. The segment at 429 to 448 (LSRSQRERTKPREAPDGETA) is disordered.

It belongs to the DnaG primase family. As to quaternary structure, monomer. Interacts with replicative helicase DnaB, as DnaB(6):DnaG(3). A stable complex DnaI(6):DnaB(6):DnaG(3) fragment can be isolated; DnaI and DnaG do not contact each other (DnaI in this complex is derived from B.subtilis). The cofactor is Zn(2+). It depends on Mg(2+) as a cofactor.

The catalysed reaction is ssDNA + n NTP = ssDNA/pppN(pN)n-1 hybrid + (n-1) diphosphate.. Its function is as follows. RNA polymerase that catalyzes the synthesis of short RNA molecules used as primers for DNA polymerase during DNA replication. This Geobacillus stearothermophilus (Bacillus stearothermophilus) protein is DNA primase.